The following is a 170-amino-acid chain: M-agglutinin (170 aa).

The N-terminal stretch at 1 to 24 is a signal peptide; that stretch reads MNLKKIAIASSVFAGITMALTCHA.

Functionally, this protein is a non-fimbrial hemagglutinin that is specific for blood group M. This Escherichia coli protein is M-agglutinin (bmaE).